The chain runs to 479 residues: Proline--tRNA ligase (479 aa).

It belongs to the class-II aminoacyl-tRNA synthetase family. ProS type 3 subfamily. In terms of assembly, homodimer.

It localises to the cytoplasm. The catalysed reaction is tRNA(Pro) + L-proline + ATP = L-prolyl-tRNA(Pro) + AMP + diphosphate. Its function is as follows. Catalyzes the attachment of proline to tRNA(Pro) in a two-step reaction: proline is first activated by ATP to form Pro-AMP and then transferred to the acceptor end of tRNA(Pro). The polypeptide is Proline--tRNA ligase (Mesomycoplasma hyopneumoniae (strain J / ATCC 25934 / NCTC 10110) (Mycoplasma hyopneumoniae)).